The chain runs to 176 residues: NAD(P)H-quinone oxidoreductase subunit 6, chloroplastic (176 aa).

5 consecutive transmembrane segments (helical) span residues 10-30 (FLLVFLGLGLILGGLGVVLLT), 32-52 (PIYSAFSLGLVLVCISLFYIL), 61-81 (AQLLIYVGAINVLIIFAVMFM), 95-115 (VGSGVTSLVCTSIFVSLITII), and 152-172 (FFLPFEFISIILLVALIGAIA).

The protein belongs to the complex I subunit 6 family. NDH is composed of at least 16 different subunits, 5 of which are encoded in the nucleus.

Its subcellular location is the plastid. The protein resides in the chloroplast thylakoid membrane. It carries out the reaction a plastoquinone + NADH + (n+1) H(+)(in) = a plastoquinol + NAD(+) + n H(+)(out). The catalysed reaction is a plastoquinone + NADPH + (n+1) H(+)(in) = a plastoquinol + NADP(+) + n H(+)(out). NDH shuttles electrons from NAD(P)H:plastoquinone, via FMN and iron-sulfur (Fe-S) centers, to quinones in the photosynthetic chain and possibly in a chloroplast respiratory chain. The immediate electron acceptor for the enzyme in this species is believed to be plastoquinone. Couples the redox reaction to proton translocation, and thus conserves the redox energy in a proton gradient. The polypeptide is NAD(P)H-quinone oxidoreductase subunit 6, chloroplastic (ndhG) (Manihot esculenta (Cassava)).